The chain runs to 160 residues: 2-C-methyl-D-erythritol 2,4-cyclodiphosphate synthase (160 aa).

Residues Asp-11 and His-13 each contribute to the a divalent metal cation site. Residues 11–13 and 37–38 each bind 4-CDP-2-C-methyl-D-erythritol 2-phosphate; these read DIH and HS. His-45 provides a ligand contact to a divalent metal cation. 4-CDP-2-C-methyl-D-erythritol 2-phosphate contacts are provided by residues 59 to 61, 135 to 138, and Arg-145; these read DIG and TTNE.

Belongs to the IspF family. Homotrimer. A divalent metal cation serves as cofactor.

The catalysed reaction is 4-CDP-2-C-methyl-D-erythritol 2-phosphate = 2-C-methyl-D-erythritol 2,4-cyclic diphosphate + CMP. It functions in the pathway isoprenoid biosynthesis; isopentenyl diphosphate biosynthesis via DXP pathway; isopentenyl diphosphate from 1-deoxy-D-xylulose 5-phosphate: step 4/6. Functionally, involved in the biosynthesis of isopentenyl diphosphate (IPP) and dimethylallyl diphosphate (DMAPP), two major building blocks of isoprenoid compounds. Catalyzes the conversion of 4-diphosphocytidyl-2-C-methyl-D-erythritol 2-phosphate (CDP-ME2P) to 2-C-methyl-D-erythritol 2,4-cyclodiphosphate (ME-CPP) with a corresponding release of cytidine 5-monophosphate (CMP). This Nostoc punctiforme (strain ATCC 29133 / PCC 73102) protein is 2-C-methyl-D-erythritol 2,4-cyclodiphosphate synthase.